The following is a 152-amino-acid chain: Large ribosomal subunit protein bL9 (152 aa).

This sequence belongs to the bacterial ribosomal protein bL9 family.

In terms of biological role, binds to the 23S rRNA. The protein is Large ribosomal subunit protein bL9 of Mycoplasmopsis synoviae (strain 53) (Mycoplasma synoviae).